A 142-amino-acid chain; its full sequence is ATP synthase epsilon chain (142 aa).

This sequence belongs to the ATPase epsilon chain family. As to quaternary structure, F-type ATPases have 2 components, CF(1) - the catalytic core - and CF(0) - the membrane proton channel. CF(1) has five subunits: alpha(3), beta(3), gamma(1), delta(1), epsilon(1). CF(0) has three main subunits: a, b and c.

The protein resides in the cell inner membrane. Produces ATP from ADP in the presence of a proton gradient across the membrane. The chain is ATP synthase epsilon chain from Actinobacillus succinogenes (strain ATCC 55618 / DSM 22257 / CCUG 43843 / 130Z).